A 375-amino-acid polypeptide reads, in one-letter code: Succinyl-diaminopimelate desuccinylase (375 aa).

H66 is a Zn(2+) binding site. Residue D68 is part of the active site. D99 serves as a coordination point for Zn(2+). Residue E133 is the Proton acceptor of the active site. The Zn(2+) site is built by E134, E162, and H348.

This sequence belongs to the peptidase M20A family. DapE subfamily. As to quaternary structure, homodimer. Zn(2+) is required as a cofactor. The cofactor is Co(2+).

The enzyme catalyses N-succinyl-(2S,6S)-2,6-diaminopimelate + H2O = (2S,6S)-2,6-diaminopimelate + succinate. Its pathway is amino-acid biosynthesis; L-lysine biosynthesis via DAP pathway; LL-2,6-diaminopimelate from (S)-tetrahydrodipicolinate (succinylase route): step 3/3. Functionally, catalyzes the hydrolysis of N-succinyl-L,L-diaminopimelic acid (SDAP), forming succinate and LL-2,6-diaminopimelate (DAP), an intermediate involved in the bacterial biosynthesis of lysine and meso-diaminopimelic acid, an essential component of bacterial cell walls. This is Succinyl-diaminopimelate desuccinylase from Escherichia coli O6:K15:H31 (strain 536 / UPEC).